The sequence spans 254 residues: MSSQPPPLPWLDPNQDFPPTSQAWDENSPAPGLLAAGGVLDVETLRRAYSQGIFPWYSEGQPTLWWSPNPRMVLQVANFRLRPSFKKKIRQFCQTPGCEIRIDSAFEQVIEACASSARIGQSGTWIVPDMRAAYGELHRVGLAHSVETWVNGELAGGLYCVALGKAVFGESMFSRVSDASKIALAALIGFCRHHGVKQIDCQQNTPHLASLGAGEISRDLFLKGLAAGLAEAGPAWEFDRRFWQQLLTPESMST.

A compositionally biased stretch (pro residues) spans 1-10; that stretch reads MSSQPPPLPW. Positions 1–28 are disordered; that stretch reads MSSQPPPLPWLDPNQDFPPTSQAWDENS.

Belongs to the L/F-transferase family.

Its subcellular location is the cytoplasm. The enzyme catalyses N-terminal L-lysyl-[protein] + L-leucyl-tRNA(Leu) = N-terminal L-leucyl-L-lysyl-[protein] + tRNA(Leu) + H(+). It catalyses the reaction N-terminal L-arginyl-[protein] + L-leucyl-tRNA(Leu) = N-terminal L-leucyl-L-arginyl-[protein] + tRNA(Leu) + H(+). It carries out the reaction L-phenylalanyl-tRNA(Phe) + an N-terminal L-alpha-aminoacyl-[protein] = an N-terminal L-phenylalanyl-L-alpha-aminoacyl-[protein] + tRNA(Phe). Functions in the N-end rule pathway of protein degradation where it conjugates Leu, Phe and, less efficiently, Met from aminoacyl-tRNAs to the N-termini of proteins containing an N-terminal arginine or lysine. The sequence is that of Leucyl/phenylalanyl-tRNA--protein transferase from Albidiferax ferrireducens (strain ATCC BAA-621 / DSM 15236 / T118) (Rhodoferax ferrireducens).